A 215-amino-acid polypeptide reads, in one-letter code: Pyrrolidone-carboxylate peptidase (215 aa).

Residues Glu-80, Cys-143, and His-167 contribute to the active site.

The protein belongs to the peptidase C15 family. Homotetramer.

It is found in the cytoplasm. It catalyses the reaction Release of an N-terminal pyroglutamyl group from a polypeptide, the second amino acid generally not being Pro.. Functionally, removes 5-oxoproline from various penultimate amino acid residues except L-proline. The polypeptide is Pyrrolidone-carboxylate peptidase (Bacillus cereus (strain ZK / E33L)).